The chain runs to 135 residues: Basic phospholipase A2 6 (135 aa).

Intrachain disulfides connect Cys-28–Cys-87, Cys-42–Cys-134, Cys-44–Cys-60, Cys-59–Cys-115, Cys-66–Cys-108, Cys-76–Cys-101, and Cys-94–Cys-106. Ca(2+) is bound by residues Tyr-43, Gly-45, and Gly-47. His-63 is a catalytic residue. Asp-64 lines the Ca(2+) pocket. Asp-109 is an active-site residue.

Belongs to the phospholipase A2 family. Group I subfamily. D49 sub-subfamily. It depends on Ca(2+) as a cofactor. As to expression, expressed by the venom gland.

Its subcellular location is the secreted. The catalysed reaction is a 1,2-diacyl-sn-glycero-3-phosphocholine + H2O = a 1-acyl-sn-glycero-3-phosphocholine + a fatty acid + H(+). Snake venom phospholipase A2 (PLA2) that inhibits neuromuscular transmission by blocking acetylcholine release from the nerve termini. PLA2 catalyzes the calcium-dependent hydrolysis of the 2-acyl groups in 3-sn-phosphoglycerides. Very weakly suppress the acetylcholine (ACh)-evoked current mediated by alpha-7-similar nAChRs in L.stagnalis neurons. This is Basic phospholipase A2 6 from Bungarus fasciatus (Banded krait).